Consider the following 275-residue polypeptide: Protein FAM210A (275 aa).

The segment at 68-108 (SSQPADTPRKVPEEREPLTSATEVPKQSPVESDASDPDPLQ) is disordered. Residues 74-84 (TPRKVPEEREP) show a composition bias toward basic and acidic residues. The 113-residue stretch at 109 to 221 (DKSISLVQRF…GYMSTPPPVK (113 aa)) folds into the DUF1279 domain. A helical membrane pass occupies residues 128–148 (VMIPVHLVTSTVWFGSFYYAA). A coiled-coil region spans residues 221 to 271 (KEYLQDRMEETKDKITEKMEETKDKITEKMEETKDKITEKIQETKDKVSFK).

This sequence belongs to the FAM210 family. In terms of assembly, interacts with ATAD3A.

The protein localises to the membrane. Its subcellular location is the mitochondrion. The protein resides in the cytoplasm. Functionally, may play a role in the structure and strength of both muscle and bone. This Gallus gallus (Chicken) protein is Protein FAM210A (FAM210A).